A 448-amino-acid chain; its full sequence is Exodeoxyribonuclease 7 large subunit (448 aa).

Belongs to the XseA family. As to quaternary structure, heterooligomer composed of large and small subunits.

The protein localises to the cytoplasm. The enzyme catalyses Exonucleolytic cleavage in either 5'- to 3'- or 3'- to 5'-direction to yield nucleoside 5'-phosphates.. Its function is as follows. Bidirectionally degrades single-stranded DNA into large acid-insoluble oligonucleotides, which are then degraded further into small acid-soluble oligonucleotides. The chain is Exodeoxyribonuclease 7 large subunit from Shewanella sp. (strain MR-4).